The primary structure comprises 218 residues: Adenylate kinase (218 aa).

10–15 (GAGKGT) lines the ATP pocket. The segment at 30-59 (STGDMLRNAAKEGKPLGLEAKKIMDAGQLV) is NMP. AMP is bound by residues T31, R36, 57-59 (QLV), 85-88 (GFPR), and Q92. The interval 122-159 (GRRVHLASGRSYHVMFNPPKQEGLDDATGEPLVQRADD) is LID. Residues R123 and 132–133 (SY) each bind ATP. AMP-binding residues include R156 and R167. G203 serves as a coordination point for ATP.

Belongs to the adenylate kinase family. As to quaternary structure, monomer.

It is found in the cytoplasm. The catalysed reaction is AMP + ATP = 2 ADP. It functions in the pathway purine metabolism; AMP biosynthesis via salvage pathway; AMP from ADP: step 1/1. Its function is as follows. Catalyzes the reversible transfer of the terminal phosphate group between ATP and AMP. Plays an important role in cellular energy homeostasis and in adenine nucleotide metabolism. This is Adenylate kinase from Chlorobium chlorochromatii (strain CaD3).